An 85-amino-acid polypeptide reads, in one-letter code: Occlusion-derived virus envelope protein E18 (85 aa).

It localises to the virion membrane. Component of the polyhedra envelope. The sequence is that of Occlusion-derived virus envelope protein E18 from Orgyia pseudotsugata (Douglas-fir tussock moth).